The sequence spans 396 residues: Probable sugar efflux transporter (396 aa).

12 consecutive transmembrane segments (helical) span residues valine 15–leucine 35, valine 50–leucine 70, leucine 81–phenylalanine 101, valine 103–alanine 123, alanine 136–isoleucine 156, threonine 169–proline 189, leucine 202–valine 222, phenylalanine 246–glycine 266, serine 275–alanine 295, leucine 301–valine 321, valine 333–glycine 353, and alanine 364–phenylalanine 384.

The protein belongs to the major facilitator superfamily. SotB (TC 2.A.1.2) family.

Its subcellular location is the cell inner membrane. In terms of biological role, involved in the efflux of sugars. The physiological role may be the reduction of the intracellular concentration of toxic sugars or sugar metabolites. This Salmonella paratyphi A (strain ATCC 9150 / SARB42) protein is Probable sugar efflux transporter.